A 354-amino-acid polypeptide reads, in one-letter code: Protein RecA (354 aa).

67-74 (GPESSGKT) is an ATP binding site.

This sequence belongs to the RecA family.

The protein localises to the cytoplasm. Its function is as follows. Can catalyze the hydrolysis of ATP in the presence of single-stranded DNA, the ATP-dependent uptake of single-stranded DNA by duplex DNA, and the ATP-dependent hybridization of homologous single-stranded DNAs. It interacts with LexA causing its activation and leading to its autocatalytic cleavage. The polypeptide is Protein RecA (Pasteurella multocida (strain Pm70)).